Reading from the N-terminus, the 500-residue chain is MSSTANSAAHEHAEKTIEADAATGAAEDTSAQLGAERGATRFDIVLGKRGCELAAPVLRAVKCLITGAFLVMRKYSVVVYCATERGLVYVDLGWTIFDQYDFLPGGSDDPLLFSVATPQNGFLLDFLCDPPKKCAQDPVLSARFLVTDSDDPEEARELLKLIVTRESGTSTKIKRAAQTDERIYMPTANSACQVALEPYSHTEITKWLGALPKDAGVKVSISDTALGLERIGCAADSVSFNAQWMDRRADRVTSCDILAKLTGVGPDAGKRSLSARSALKKLKENRVVAVHSGSGWVHSELGWPESVRVRSAQSLKKALQWLKIGAWGVPNLVFYKDKVTGLGVELSGRGEEDLWGCILFFDSEEMDDLTAQEFQEPEDCAEADYGAVSESDDAAAETHRGADGIDGADEEDSCPDMMLISATTLTQQPGRKRAPGATLQQSAQPSSPATHRKQKRPAGAARTGAGDTEQNCVHDGEASLRAPCPASNDDQEPANKRGKR.

The interval 388–500 (VSESDDAAAE…QEPANKRGKR (113 aa)) is disordered. Residues 438-449 (TLQQSAQPSSPA) are compositionally biased toward polar residues.

It belongs to the herpesviridae DNA polymerase processivity factor family. Interacts with the DNA polymerase catalytic subunit UL30. Interacts with the origin-binding protein.

The protein localises to the host nucleus. Functionally, plays an essential role in viral DNA replication by acting as the polymerase accessory subunit. Associates with the viral polymerase to increase its processivity and forms high-affinity direct interactions with DNA. Facilitates the origin-binding protein UL9 loading onto DNA thus increasing its ability to assemble into a functional complex capable of unwinding duplex DNA. This chain is DNA polymerase processivity factor (UL42), found in Amazona oratrix (yellow-headed parrot).